A 248-amino-acid chain; its full sequence is Ribosomal RNA small subunit methyltransferase J (248 aa).

Residues 98–99 (RD), 114–115 (ER), 150–151 (SS), and D168 contribute to the S-adenosyl-L-methionine site.

This sequence belongs to the methyltransferase superfamily. RsmJ family.

It localises to the cytoplasm. The enzyme catalyses guanosine(1516) in 16S rRNA + S-adenosyl-L-methionine = N(2)-methylguanosine(1516) in 16S rRNA + S-adenosyl-L-homocysteine + H(+). In terms of biological role, specifically methylates the guanosine in position 1516 of 16S rRNA. In Shewanella baltica (strain OS223), this protein is Ribosomal RNA small subunit methyltransferase J.